Here is a 197-residue protein sequence, read N- to C-terminus: RIP-like protein (197 aa).

The disordered stretch occupies residues 1–20 (MNSTQSPVYRTSVEQKRHAQ). Residues 122–191 (CPVCQIKNLR…GQLYDMCGSC (70 aa)) form an RIP-type zinc finger.

This chain is RIP-like protein (Ripalpha), found in Drosophila melanogaster (Fruit fly).